The following is a 222-amino-acid chain: Ribonuclease T (222 aa).

Residues 20 to 194 enclose the Exonuclease domain; the sequence is VVIDVETAGF…YDTERTAELF (175 aa). 4 residues coordinate Mg(2+): D23, E25, H181, and D186. Residue H181 is the Proton donor/acceptor of the active site.

Belongs to the RNase T family. As to quaternary structure, homodimer. The cofactor is Mg(2+).

Functionally, trims short 3' overhangs of a variety of RNA species, leaving a one or two nucleotide 3' overhang. Responsible for the end-turnover of tRNA: specifically removes the terminal AMP residue from uncharged tRNA (tRNA-C-C-A). Also appears to be involved in tRNA biosynthesis. This Shewanella sp. (strain MR-4) protein is Ribonuclease T.